Reading from the N-terminus, the 182-residue chain is Transcription termination/antitermination protein NusG (182 aa).

This sequence belongs to the NusG family.

In terms of biological role, participates in transcription elongation, termination and antitermination. This chain is Transcription termination/antitermination protein NusG, found in Chlamydia pneumoniae (Chlamydophila pneumoniae).